The chain runs to 133 residues: Large ribosomal subunit protein eL14 (133 aa).

The protein belongs to the eukaryotic ribosomal protein eL14 family.

The protein is Large ribosomal subunit protein eL14 (RPL14) of Griffithsia japonica (Red alga).